Reading from the N-terminus, the 371-residue chain is Protein maelstrom 1 (371 aa).

Positions 2-68 form a DNA-binding region, HMG box; that stretch reads AQNKPNAFMA…VLERESKTER (67 aa).

The protein belongs to the maelstrom family.

It is found in the cytoplasm. Its subcellular location is the nucleus. Functionally, involved both in the piRNA and miRNA metabolic processes. As a component of the meiotic nuage, plays a central role during oogenesis by repressing transposable elements and preventing their mobilization, which is essential for the germline integrity. Repression of transposable elements is mediated via the piRNA metabolic process, which mediates the repression of transposable elements during meiosis by forming complexes composed of piRNAs and Piwi proteins and governs the repression of transposons. As a nuclear component, it is required for proper differentiation in the germline stem cell (GSC) lineage by repressing microRNA-7 (miR-7), thereby acting as an indirect regulator of bag-of-marbles (Bam). Acts by binding to the promoter of miR-7 gene and repressing its expression; miR-7 repression alleviates the Bam repression by miR-7, thereby allowing differentiation in the germline stem cell (GSC) lineage. The protein is Protein maelstrom 1 (mael1) of Drosophila pseudoobscura pseudoobscura (Fruit fly).